The chain runs to 557 residues: (-)-germacrene D synthase (557 aa).

Mg(2+) contacts are provided by Asp-310, Asp-314, and Glu-462. The DDXXD motif motif lies at 310–314; it reads DDIYD.

Belongs to the terpene synthase family. Tpsa subfamily. Requires Mg(2+) as cofactor. As to expression, expressed in flowers. Detected in stems, young leaves and tendrils.

The protein resides in the cytoplasm. It catalyses the reaction (2E,6E)-farnesyl diphosphate + H2O = (1E,4S,5E,7R)-germacra-1(10),5-dien-11-ol + diphosphate. The catalysed reaction is (2E,6E)-farnesyl diphosphate = (-)-germacrene D + diphosphate. It participates in secondary metabolite biosynthesis; terpenoid biosynthesis. Involved in the biosynthesis of germacrene D. Can use farnesyl diphosphate as substrate, but not geranyl diphosphate or geranylgeranyl diphosphate. Produces mainly (-)-germacrene D along with gamma-cadinene. This is (-)-germacrene D synthase from Vitis vinifera (Grape).